Consider the following 336-residue polypeptide: Fructose-1,6-bisphosphatase class 1 (336 aa).

Residues glutamate 90, aspartate 112, leucine 114, and aspartate 115 each contribute to the Mg(2+) site. Substrate is bound by residues 115–118, asparagine 211, and lysine 277; that span reads DGSS. Glutamate 283 is a binding site for Mg(2+).

This sequence belongs to the FBPase class 1 family. Homotetramer. The cofactor is Mg(2+).

The protein localises to the cytoplasm. The catalysed reaction is beta-D-fructose 1,6-bisphosphate + H2O = beta-D-fructose 6-phosphate + phosphate. It participates in carbohydrate biosynthesis; gluconeogenesis. The chain is Fructose-1,6-bisphosphatase class 1 from Pseudomonas fluorescens (strain Pf0-1).